We begin with the raw amino-acid sequence, 1014 residues long: Pre-mRNA-processing ATP-dependent RNA helicase prp11 (1014 aa).

Basic residues predominate over residues 1–11 (MSRRTRSRSPP). The interval 1–149 (MSRRTRSRSP…SRFDRTERVG (149 aa)) is disordered. Composition is skewed to basic and acidic residues over residues 15 to 87 (YNRE…EYAR) and 106 to 121 (RHAE…KSDE). Residues 418–446 (TSWSQCGLSAQTISVINSLGYEKPTSIQA) carry the Q motif motif. The 179-residue stretch at 449–627 (IPAITSGRDV…RKVLKKPVEI (179 aa)) folds into the Helicase ATP-binding domain. 462–469 (AKTGSGKT) lines the ATP pocket. The short motif at 575–578 (DEAD) is the DEAD box element. Residues 638-802 (EVEQIVEVRP…PVPKELQTLA (165 aa)) form the Helicase C-terminal domain. Positions 815–875 (KAAGGGFGGK…PEKSTGDPTL (61 aa)) are disordered. 2 stretches are compositionally biased toward basic and acidic residues: residues 827–838 (SRLDETRNAERK) and 855–875 (AEAK…DPTL).

This sequence belongs to the DEAD box helicase family. DDX46/PRP5 subfamily.

The protein localises to the nucleus. The enzyme catalyses ATP + H2O = ADP + phosphate + H(+). Functionally, ATP-dependent RNA helicase involved in pre-spliceosome/complex A assembly and mRNA splicing. Bridges U1 and U2 snRNPs during pre-spliceosome assembly and enables stable U2 snRNP association with intron RNA. Through its helicase activity probably catalyzes an ATP-dependent conformational change of U2 snRNP. This chain is Pre-mRNA-processing ATP-dependent RNA helicase prp11 (prp11), found in Schizosaccharomyces pombe (strain 972 / ATCC 24843) (Fission yeast).